The sequence spans 307 residues: Epimerase family protein ML0860 (307 aa).

The protein belongs to the NAD(P)-dependent epimerase/dehydratase family. SDR39U1 subfamily.

This Mycobacterium leprae (strain TN) protein is Epimerase family protein ML0860.